Reading from the N-terminus, the 243-residue chain is Uridylate kinase (243 aa).

Residue 15–18 participates in ATP binding; the sequence is KLSG. The segment at 23–28 is involved in allosteric activation by GTP; sequence GSEGFG. Gly-57 is a binding site for UMP. Residues Gly-58 and Arg-62 each coordinate ATP. Residues Asp-77 and 138 to 145 each bind UMP; that span reads TGNPFFTT. Residues Thr-165, Tyr-171, and Asp-174 each contribute to the ATP site.

This sequence belongs to the UMP kinase family. As to quaternary structure, homohexamer.

It localises to the cytoplasm. It catalyses the reaction UMP + ATP = UDP + ADP. Its pathway is pyrimidine metabolism; CTP biosynthesis via de novo pathway; UDP from UMP (UMPK route): step 1/1. Allosterically activated by GTP. Inhibited by UTP. Functionally, catalyzes the reversible phosphorylation of UMP to UDP. The chain is Uridylate kinase from Vibrio cholerae serotype O1 (strain ATCC 39541 / Classical Ogawa 395 / O395).